Consider the following 52-residue polypeptide: Eukaryotic translation initiation factor 2 subunit 1 (52 aa).

The 37-residue stretch at 16–52 folds into the S1 motif domain; that stretch reads EDVVMVNVRSIAEMGAYVSLLEYNNIEGRILLSELSR. S48 bears the Phosphoserine; by HRI mark. S51 is modified (phosphoserine).

It belongs to the eIF-2-alpha family. Eukaryotic translation initiation factor 2 eIF2 is a heterotrimeric complex composed of an alpha (EIF2S1), a beta (EIF2S2) and a gamma (EIF2S3) chain. eIF2 is member of the 43S pre-initiation complex (43S PIC). eIF2 forms a complex with at least CELF1/CUGBP1, CALR, CALR3, EIF2S1, EIF2S2, HSP90B1 and HSPA5. Interaction with METAP2 protects EIF2S1 from inhibitory phosphorylation. Interacts with ABCF1. Associates with ribosomes. Interacts with DDX3X in an RNA-independent manner. Post-translationally, phosphorylation at Ser-48 and Ser-51 stabilizes the eIF-2/GDP/eIF2B complex and prevents GDP/GTP exchange reaction, thus impairing the recycling of eIF-2 between successive rounds of initiation and leading to global inhibition of translation, while concomitantly initiating the preferential translation of integrated stress response (ISR)-specific mRNAs. Substrate for at least 4 kinases: EIF2AK1/HRI, EIF2AK2/PKR, EIF2AK3/PERK and EIF2AK4/GCN2. Phosphorylation on Ser-51 by the EIF2AK4/GCN2 protein kinase occurs in response to amino acid starvation and UV irradiation. Phosphorylation at Ser-51 by the EIF2AK3/PERK protein kinase occurs in response to the unfolded protein response. Phosphorylation at Ser-51 by EIF2AK1/HRI in response to mitochondrial damage promotes relocalization to the mitochondrial surface.

Its subcellular location is the cytoplasm. It localises to the stress granule. It is found in the cytosol. The protein localises to the mitochondrion. Its activity is regulated as follows. Activity is regulated by phosphorylation at Ser-49 and Ser-52, which stabilizes the eIF2/GDP/eIF2B complex and prevents the eIF2B-mediated exchange of GDP for GTP, thereby preventing the formation of the 43S pre-initiation complex (43S PIC). This results in the global attenuation of 5' cap-dependent protein synthesis and concomitant translation of ISR-specific mRNAs that contain a short upstream open reading frame (uORF) in their 5' UTR, such as ATF4, ATF5, DDIT3/CHOP and PPP1R15A/GADD34. Functionally, member of the eIF2 complex that functions in the early steps of protein synthesis by forming a ternary complex with GTP and initiator tRNA. This complex binds to a 40S ribosomal subunit, followed by mRNA binding to form a 43S pre-initiation complex. Junction of the 60S ribosomal subunit to form the 80S initiation complex is preceded by hydrolysis of the GTP bound to eIF2 and release of an eIF2-GDP binary complex. In order for eIF2 to recycle and catalyze another round of initiation, the GDP bound to eIF2 must exchange with GTP by way of a reaction catalyzed by eIF2B. EIF2S1/eIF2-alpha is a key component of the integrated stress response (ISR), required for adaptation to various stress: phosphorylation by metabolic-stress sensing protein kinases (EIF2AK1/HRI, EIF2AK2/PKR, EIF2AK3/PERK and EIF2AK4/GCN2) in response to stress converts EIF2S1/eIF2-alpha in a global protein synthesis inhibitor, leading to a attenuation of cap-dependent translation, while concomitantly initiating the preferential translation of ISR-specific mRNAs, such as the transcriptional activators ATF4 and QRICH1, and hence allowing ATF4- and QRICH1-mediated reprogramming. EIF2S1/eIF2-alpha also acts as an activator of mitophagy in response to mitochondrial damage: phosphorylation by EIF2AK1/HRI promotes relocalization to the mitochondrial surface, thereby triggering PRKN-independent mitophagy. In Oryctolagus cuniculus (Rabbit), this protein is Eukaryotic translation initiation factor 2 subunit 1 (EIF2S1).